The following is a 321-amino-acid chain: uncharacterized protein (321 aa).

Residue 28–35 (GPINSGKT) participates in ATP binding.

This sequence belongs to the archaeal ATPase family.

This is an uncharacterized protein from Pyrococcus horikoshii (strain ATCC 700860 / DSM 12428 / JCM 9974 / NBRC 100139 / OT-3).